We begin with the raw amino-acid sequence, 995 residues long: DNA repair protein Rev1 (995 aa).

Residues 35-121 (RKSDLFQGIS…KIVDYKPYLL (87 aa)) enclose the BRCT domain. Disordered stretches follow at residues 135–164 (GKPKDNGANESKSDVEPPKDKAEVEVDSTK) and 182–211 (VATSPEKEASASESKITNLSTTSNNSTTAR). The span at 136 to 164 (KPKDNGANESKSDVEPPKDKAEVEVDSTK) shows a compositional bias: basic and acidic residues. Positions 192–211 (ASESKITNLSTTSNNSTTAR) are enriched in low complexity. Residues 275 to 505 (VMHIDMDCFF…MSLDLLPGVG (231 aa)) form the UmuC domain. Aspartate 279 serves as a coordination point for Mg(2+). Residues 361–367 (SCSYEAR), asparagine 373, and aspartate 421 contribute to the dCTP site. Position 421 (aspartate 421) interacts with Mg(2+). Glutamate 422 is an active-site residue. The segment at 696–868 (SEMRKDKPIP…HYIRSDQIVA (173 aa)) is interaction with PolI. The segment at 878–995 (VNPHILKLIS…IEYIRCIKCS (118 aa)) is interaction with PolH/DNApol-eta.

It belongs to the DNA polymerase type-Y family. In terms of assembly, interacts (via C-terminus) with PolH/DNApol-eta (via C-terminal regions). Interacts (via C-terminus) with PolI. Mg(2+) is required as a cofactor.

Its subcellular location is the nucleus. Functionally, deoxycytidyl transferase involved in DNA repair. Transfers a dCMP residue from dCTP to the 3'-end of a DNA primer in a template-dependent reaction. May assist in the first step in the bypass of abasic lesions by the insertion of a nucleotide opposite the lesion. Required for normal induction of mutations by physical and chemical agents. During homologous recombination (HR) repair of DNA double-strand breaks (DSBs) regulates the extent of repair synthesis. Possibly recruits the DNA polymerase zeta complex or another translesion polymerase to early DSB repair intermediates to initiate repair synthesis, while also blocking the access of more processive polymerases preventing them from acting during the initial stages of HR repair. The polypeptide is DNA repair protein Rev1 (Drosophila melanogaster (Fruit fly)).